Consider the following 945-residue polypeptide: Isoleucine--tRNA ligase 1 (945 aa).

The 'HIGH' region signature appears at 66 to 76 (PYANGDIHLGH). E581 provides a ligand contact to L-isoleucyl-5'-AMP. A 'KMSKS' region motif is present at residues 622–626 (KMSKS). ATP is bound at residue K625. The Zn(2+) site is built by C908, C911, C928, and C931.

It belongs to the class-I aminoacyl-tRNA synthetase family. IleS type 1 subfamily. In terms of assembly, monomer. Zn(2+) serves as cofactor.

Its subcellular location is the cytoplasm. The catalysed reaction is tRNA(Ile) + L-isoleucine + ATP = L-isoleucyl-tRNA(Ile) + AMP + diphosphate. Catalyzes the attachment of isoleucine to tRNA(Ile). As IleRS can inadvertently accommodate and process structurally similar amino acids such as valine, to avoid such errors it has two additional distinct tRNA(Ile)-dependent editing activities. One activity is designated as 'pretransfer' editing and involves the hydrolysis of activated Val-AMP. The other activity is designated 'posttransfer' editing and involves deacylation of mischarged Val-tRNA(Ile). This chain is Isoleucine--tRNA ligase 1, found in Burkholderia pseudomallei (strain K96243).